The following is a 466-amino-acid chain: Adenylosuccinate lyase (466 aa).

Residues 21–22, 97–99, and 130–131 contribute to the substrate site; these read RY, NHD, and TS. His180 functions as the Proton donor/acceptor in the catalytic mechanism. Gln259 lines the substrate pocket. Ser307 acts as the Proton donor/acceptor in catalysis. 3 residues coordinate substrate: Arg347, Ser352, and Arg356.

It belongs to the lyase 1 family. Adenylosuccinate lyase subfamily. As to quaternary structure, homotetramer. Residues from neighboring subunits contribute catalytic and substrate-binding residues to each active site.

The enzyme catalyses N(6)-(1,2-dicarboxyethyl)-AMP = fumarate + AMP. The catalysed reaction is (2S)-2-[5-amino-1-(5-phospho-beta-D-ribosyl)imidazole-4-carboxamido]succinate = 5-amino-1-(5-phospho-beta-D-ribosyl)imidazole-4-carboxamide + fumarate. The protein operates within purine metabolism; AMP biosynthesis via de novo pathway; AMP from IMP: step 2/2. It participates in purine metabolism; IMP biosynthesis via de novo pathway; 5-amino-1-(5-phospho-D-ribosyl)imidazole-4-carboxamide from 5-amino-1-(5-phospho-D-ribosyl)imidazole-4-carboxylate: step 2/2. The polypeptide is Adenylosuccinate lyase (purB) (Dictyostelium discoideum (Social amoeba)).